Here is a 726-residue protein sequence, read N- to C-terminus: ATP-dependent permease MDL1, mitochondrial (726 aa).

The transit peptide at 1–112 directs the protein to the mitochondrion; the sequence is MDPIRFGLSR…LAFLKLCVRH (112 aa). 3 N-linked (GlcNAc...) asparagine glycosylation sites follow: Asn66, Asn113, and Asn132. Transmembrane regions (helical) follow at residues 158 to 178, 196 to 216, 306 to 326, 386 to 406, and 423 to 443; these read FFIA…IPYI, IMGI…FLGS, GYMS…GEYV, GIFF…ILAL, and SFLL…GCFT. The ABC transmembrane type-1 domain maps to 158–447; sequence FFIAGSLLLV…LSGCFTDIMK (290 aa). The ABC transporter domain maps to 482 to 719; the sequence is LSFRNVGFAY…GTNFYKLMRW (238 aa). Asn502 carries N-linked (GlcNAc...) asparagine glycosylation. An ATP-binding site is contributed by 517–524; sequence APSGGGKS. N-linked (GlcNAc...) asparagine glycosylation is found at Asn584, Asn598, and Asn668.

This sequence belongs to the ABC transporter superfamily. ABCB family. Mitochondrial peptide exporter (TC 3.A.1.212) subfamily.

The protein localises to the mitochondrion inner membrane. In terms of biological role, mediates export of peptides generated upon proteolysis of mitochondrial inner membrane proteins. The sequence is that of ATP-dependent permease MDL1, mitochondrial (mdl1) from Schizosaccharomyces pombe (strain 972 / ATCC 24843) (Fission yeast).